We begin with the raw amino-acid sequence, 219 residues long: Glutamine transport system permease protein GlnP (219 aa).

At 1–22 (MQFDWSAIWPAIPLLIEGAKMT) the chain is on the periplasmic side. Residues 19-209 (AKMTLWISVL…IITLVLSFIL (191 aa)) enclose the ABC transmembrane type-1 domain. A helical membrane pass occupies residues 23 to 43 (LWISVLGLAGGLVIGLLAGFA). The Cytoplasmic segment spans residues 44-53 (RTFGGWIANH). The chain crosses the membrane as a helical span at residues 54–74 (VALVFIEVIRGTPIVVQVMFI). Residues 75–88 (YFALPMAFNDLRID) are Periplasmic-facing. The chain crosses the membrane as a helical span at residues 89 to 109 (PFTAAVVTIMINSGAYIAEIT). Residues 110–150 (RGAVLSIHKGFREAGLALGLSRWETIRYVILPLALRRMLPP) lie on the Cytoplasmic side of the membrane. A helical transmembrane segment spans residues 151-171 (LGNQWIISIKDTSLFIVIGVA). Topologically, residues 172-187 (ELTRQGQEIIAGNFRA) are periplasmic. Residues 188–208 (LEIWSAVAVFYLIITLVLSFI) form a helical membrane-spanning segment. At 209-219 (LRRLERRMKIL) the chain is on the cytoplasmic side.

It belongs to the binding-protein-dependent transport system permease family. HisMQ subfamily.

The protein resides in the cell inner membrane. In terms of biological role, part of the binding-protein-dependent transport system for glutamine; probably responsible for the translocation of the substrate across the membrane. This is Glutamine transport system permease protein GlnP (glnP) from Escherichia coli O6:H1 (strain CFT073 / ATCC 700928 / UPEC).